A 120-amino-acid polypeptide reads, in one-letter code: NAD(P)H-quinone oxidoreductase subunit 3, chloroplastic (120 aa).

Transmembrane regions (helical) follow at residues 9–29 (IFWAFLIISSAIPVLAFLISG), 64–84 (MFALVFVVFDVETVFLYPWAM), and 88–108 (VLGVSAFIEAFIFVLILILGL).

This sequence belongs to the complex I subunit 3 family. In terms of assembly, NDH is composed of at least 16 different subunits, 5 of which are encoded in the nucleus.

It localises to the plastid. It is found in the chloroplast thylakoid membrane. It catalyses the reaction a plastoquinone + NADH + (n+1) H(+)(in) = a plastoquinol + NAD(+) + n H(+)(out). The enzyme catalyses a plastoquinone + NADPH + (n+1) H(+)(in) = a plastoquinol + NADP(+) + n H(+)(out). Functionally, NDH shuttles electrons from NAD(P)H:plastoquinone, via FMN and iron-sulfur (Fe-S) centers, to quinones in the photosynthetic chain and possibly in a chloroplast respiratory chain. The immediate electron acceptor for the enzyme in this species is believed to be plastoquinone. Couples the redox reaction to proton translocation, and thus conserves the redox energy in a proton gradient. The sequence is that of NAD(P)H-quinone oxidoreductase subunit 3, chloroplastic from Capsella bursa-pastoris (Shepherd's purse).